Here is a 460-residue protein sequence, read N- to C-terminus: Cysteine--tRNA ligase (460 aa).

Residue C28 participates in Zn(2+) binding. The short motif at 30-40 is the 'HIGH' region element; that stretch reads MTVYDYCHLGH. Residues C209, H234, and E238 each coordinate Zn(2+). The 'KMSKS' region signature appears at 266–270; the sequence is KMSKS. K269 is an ATP binding site.

The protein belongs to the class-I aminoacyl-tRNA synthetase family. As to quaternary structure, monomer. Requires Zn(2+) as cofactor.

It localises to the cytoplasm. The catalysed reaction is tRNA(Cys) + L-cysteine + ATP = L-cysteinyl-tRNA(Cys) + AMP + diphosphate. This chain is Cysteine--tRNA ligase, found in Pseudomonas putida (strain W619).